The chain runs to 200 residues: Claudin-11 (200 aa).

Position 1 (M1) is a topological domain, cytoplasmic. Residues 2-22 (VATCLQVVGFVTSFVGWIGVI) form a helical membrane-spanning segment. Topologically, residues 23 to 75 (VTTSTNDWVVTCGYTIPTCRKLDELGSKGLWADCVMATGLYHCKPLVDILPCR) are extracellular. A helical transmembrane segment spans residues 76-96 (ALMIAASVLGLPAILLLLTVL). Over 97 to 115 (PCIRMGQEPGVAKYRRAQL) the chain is Cytoplasmic. A helical transmembrane segment spans residues 116–136 (AGVLLILLALCAIVATIWFPV). Residues 137 to 150 (CAHRETTIVSFGYS) are Extracellular-facing. The helical transmembrane segment at 151-171 (LYAGWIGAVLCLVGGCVILCC) threads the bilayer. Residues 172-200 (AGDAQAFGENRFYYTAGSSSPTHAKSAHV) are Cytoplasmic-facing. S190 and S191 each carry phosphoserine.

It belongs to the claudin family. Interacts with tetraspanin-3/TSPAN3. Interacts with OCLN.

The protein localises to the cell junction. Its subcellular location is the tight junction. It is found in the cell membrane. Functionally, plays a major role in tight junction-specific obliteration of the intercellular space, through calcium-independent cell-adhesion activity. The chain is Claudin-11 (CLDN11) from Pongo abelii (Sumatran orangutan).